Consider the following 151-residue polypeptide: SsrA-binding protein (151 aa).

The segment at 121 to 151 (GKKLHDKRDTEKDREWQREKQRVMKNQRGAA) is disordered. The segment covering 126-142 (DKRDTEKDREWQREKQR) has biased composition (basic and acidic residues).

Belongs to the SmpB family.

It localises to the cytoplasm. Its function is as follows. Required for rescue of stalled ribosomes mediated by trans-translation. Binds to transfer-messenger RNA (tmRNA), required for stable association of tmRNA with ribosomes. tmRNA and SmpB together mimic tRNA shape, replacing the anticodon stem-loop with SmpB. tmRNA is encoded by the ssrA gene; the 2 termini fold to resemble tRNA(Ala) and it encodes a 'tag peptide', a short internal open reading frame. During trans-translation Ala-aminoacylated tmRNA acts like a tRNA, entering the A-site of stalled ribosomes, displacing the stalled mRNA. The ribosome then switches to translate the ORF on the tmRNA; the nascent peptide is terminated with the 'tag peptide' encoded by the tmRNA and targeted for degradation. The ribosome is freed to recommence translation, which seems to be the essential function of trans-translation. The protein is SsrA-binding protein of Chromobacterium violaceum (strain ATCC 12472 / DSM 30191 / JCM 1249 / CCUG 213 / NBRC 12614 / NCIMB 9131 / NCTC 9757 / MK).